The primary structure comprises 951 residues: Metal transporter CNNM1 (951 aa).

A helical transmembrane segment spans residues 23-43; that stretch reads AVLLLFFSLSPRPPAAAAWLL. Positions 116 to 135 are disordered; the sequence is GGVAPSAVPTRPPGPQRCRE. One can recognise a CNNM transmembrane domain in the interval 218–414; it reads LLPPAWLRAL…DPYSDLVKEE (197 aa). Helical transmembrane passes span 222–242, 282–302, and 321–341; these read AWLR…FSGL, LLCT…GWLY, and IHFP…GAEI. CBS domains are found at residues 433–495 and 502–568; these read LTPL…CTPL and YNRP…ILDE. Composition is skewed to polar residues over residues 731 to 740 and 814 to 824; these read SRCSGLNRSE and KAPTTRGTPQT. 2 disordered regions span residues 731–753 and 795–830; these read SRCS…GGSN and MDSS…DDPA. Phosphothreonine is present on residues Thr821 and Thr824. Position 850 is a phosphoserine (Ser850). The interval 920 to 951 is disordered; that stretch reads KLLRTLSGQKRKRSPEGERTSEDNSNLTPLIT. Polar residues predominate over residues 942–951; sequence DNSNLTPLIT.

The protein belongs to the ACDP family. As to expression, restricted to brain and testis.

The protein localises to the cell membrane. Probable metal transporter. In Homo sapiens (Human), this protein is Metal transporter CNNM1 (CNNM1).